The sequence spans 723 residues: ESX-1 secretion-associated protein EspK (723 aa).

Disordered regions lie at residues 175 to 360 (DLLQ…TPAA) and 393 to 451 (SGAG…GTPV). Positions 200–209 (TPGTPITPGT) are enriched in low complexity. Over residues 210 to 229 (PITPIPGAPVTPITPTPGTP) the composition is skewed to pro residues. The segment covering 230–249 (VTPVTPGKPVTPVTPVKPGT) has biased composition (low complexity). Pro residues-rich tracts occupy residues 250 to 265 (PGEPTPITPVTPPVAP) and 274 to 308 (PVTPAPAPHPQPAPAPAPSPGPQPVTPATPGPSGP). 3 stretches are compositionally biased toward low complexity: residues 309-319 (ATPGTPGGEPA), 393-404 (SGAGSHAATGRA), and 412-426 (AAAPSTRAASARTAP). A compositionally biased stretch (basic and acidic residues) spans 432–444 (STDHIDKPDRSES).

The protein resides in the cytoplasm. May act as a chaperone that facilitates EspB secretion through an interaction with EccCb1. The chain is ESX-1 secretion-associated protein EspK from Mycobacterium tuberculosis (strain CDC 1551 / Oshkosh).